The following is a 375-amino-acid chain: 23S rRNA (uracil(747)-C(5))-methyltransferase RlmC (375 aa).

Positions 3, 11, 14, and 87 each coordinate [4Fe-4S] cluster. Q212, F241, E262, and N307 together coordinate S-adenosyl-L-methionine. C334 acts as the Nucleophile in catalysis.

This sequence belongs to the class I-like SAM-binding methyltransferase superfamily. RNA M5U methyltransferase family. RlmC subfamily.

It catalyses the reaction uridine(747) in 23S rRNA + S-adenosyl-L-methionine = 5-methyluridine(747) in 23S rRNA + S-adenosyl-L-homocysteine + H(+). Catalyzes the formation of 5-methyl-uridine at position 747 (m5U747) in 23S rRNA. The protein is 23S rRNA (uracil(747)-C(5))-methyltransferase RlmC of Escherichia coli O127:H6 (strain E2348/69 / EPEC).